A 274-amino-acid chain; its full sequence is N-acetylmuramic acid 6-phosphate etherase (274 aa).

Positions 52-215 constitute an SIS domain; sequence IIPRMEQGGR…STSIMIRLGR (164 aa). Residue Glu80 is the Proton donor of the active site. Glu111 is an active-site residue.

This sequence belongs to the GCKR-like family. MurNAc-6-P etherase subfamily. In terms of assembly, homodimer.

It carries out the reaction N-acetyl-D-muramate 6-phosphate + H2O = N-acetyl-D-glucosamine 6-phosphate + (R)-lactate. It participates in amino-sugar metabolism; N-acetylmuramate degradation. Functionally, specifically catalyzes the cleavage of the D-lactyl ether substituent of MurNAc 6-phosphate, producing GlcNAc 6-phosphate and D-lactate. This chain is N-acetylmuramic acid 6-phosphate etherase, found in Porphyromonas gingivalis (strain ATCC BAA-308 / W83).